The primary structure comprises 285 residues: Tryptophan synthase alpha chain (285 aa).

Residues E53 and D64 each act as proton acceptor in the active site.

This sequence belongs to the TrpA family. Tetramer of two alpha and two beta chains.

It catalyses the reaction (1S,2R)-1-C-(indol-3-yl)glycerol 3-phosphate + L-serine = D-glyceraldehyde 3-phosphate + L-tryptophan + H2O. It functions in the pathway amino-acid biosynthesis; L-tryptophan biosynthesis; L-tryptophan from chorismate: step 5/5. Functionally, the alpha subunit is responsible for the aldol cleavage of indoleglycerol phosphate to indole and glyceraldehyde 3-phosphate. The sequence is that of Tryptophan synthase alpha chain from Bordetella pertussis (strain Tohama I / ATCC BAA-589 / NCTC 13251).